The primary structure comprises 331 residues: Putative phosphoribosylaminoimidazole-succinocarboxamide synthase (331 aa).

The protein belongs to the SAICAR synthetase family. Highly divergent.

The enzyme catalyses 5-amino-1-(5-phospho-D-ribosyl)imidazole-4-carboxylate + L-aspartate + ATP = (2S)-2-[5-amino-1-(5-phospho-beta-D-ribosyl)imidazole-4-carboxamido]succinate + ADP + phosphate + 2 H(+). It functions in the pathway purine metabolism; IMP biosynthesis via de novo pathway; 5-amino-1-(5-phospho-D-ribosyl)imidazole-4-carboxamide from 5-amino-1-(5-phospho-D-ribosyl)imidazole-4-carboxylate: step 1/2. The protein is Putative phosphoribosylaminoimidazole-succinocarboxamide synthase (purC) of Archaeoglobus fulgidus (strain ATCC 49558 / DSM 4304 / JCM 9628 / NBRC 100126 / VC-16).